Consider the following 637-residue polypeptide: 1-deoxy-D-xylulose-5-phosphate synthase 1 (637 aa).

Residues His-74 and 115–117 (GHS) each bind thiamine diphosphate. Asp-146 contributes to the Mg(2+) binding site. Thiamine diphosphate is bound by residues 147 to 148 (GS), Asn-175, Tyr-286, and Glu-368. Asn-175 contributes to the Mg(2+) binding site.

The protein belongs to the transketolase family. DXPS subfamily. As to quaternary structure, homodimer. Requires Mg(2+) as cofactor. It depends on thiamine diphosphate as a cofactor.

It carries out the reaction D-glyceraldehyde 3-phosphate + pyruvate + H(+) = 1-deoxy-D-xylulose 5-phosphate + CO2. It participates in metabolic intermediate biosynthesis; 1-deoxy-D-xylulose 5-phosphate biosynthesis; 1-deoxy-D-xylulose 5-phosphate from D-glyceraldehyde 3-phosphate and pyruvate: step 1/1. Catalyzes the acyloin condensation reaction between C atoms 2 and 3 of pyruvate and glyceraldehyde 3-phosphate to yield 1-deoxy-D-xylulose-5-phosphate (DXP). The sequence is that of 1-deoxy-D-xylulose-5-phosphate synthase 1 from Geobacter sulfurreducens (strain ATCC 51573 / DSM 12127 / PCA).